Consider the following 223-residue polypeptide: UPF0502 protein Sbal223_2520 (223 aa).

Belongs to the UPF0502 family.

The chain is UPF0502 protein Sbal223_2520 from Shewanella baltica (strain OS223).